A 354-amino-acid chain; its full sequence is 4-hydroxy-2-oxovalerate aldolase 6 (354 aa).

The Pyruvate carboxyltransferase domain occupies 10–262 (VRIVDTTLRD…ATGLDVMATL (253 aa)). 18–19 (RD) is a substrate binding site. Asp19 contributes to the Mn(2+) binding site. The active-site Proton acceptor is His22. 2 residues coordinate substrate: Ser172 and His201. Mn(2+)-binding residues include His201 and His203. Substrate is bound at residue Tyr292.

The protein belongs to the 4-hydroxy-2-oxovalerate aldolase family.

It carries out the reaction (S)-4-hydroxy-2-oxopentanoate = acetaldehyde + pyruvate. The sequence is that of 4-hydroxy-2-oxovalerate aldolase 6 from Rhodococcus jostii (strain RHA1).